The sequence spans 414 residues: MSKKISGGSVVEMQGDEMTRIIWELIKEKLIFPYVELDLHSYDLGIENRDATNDQVTKDAAEAIKKYNVGVKCATITPDEKRVEEFKLKQMWKSPNGTIRNILGGTVFREAIICKNIPRLVSGWVKPIIIGRHAYGDQYRATDFVVPGPGKVEITYTPSDGTQKVTYLVHNFEEGGGVAMGMYNQDKSIEDFAHSSFQMALSKGWPLYLSTKNTILKKYDGRFKDIFQEIYDKQYKSQFEARKIWYEHRLIDDMVAQAMKSEGGFIWACKNYDGDVQSDSVAQGYGSLGMMTSVLVCPDGKTVEAEAAHGTVTRHYRMYQKGQETSTNPIASIFAWTRGLAHRAKLDNNKELAFFANALEEVSVETIEAGFMTKDLAACIKGLPNVQRSDYLNTFEFMDKLGENLKIKLAQAKL.

An N-acetylserine modification is found at serine 2. Residue tyrosine 42 is modified to Phosphotyrosine. 75-77 (TIT) contacts NADP(+). Threonine 77 is a substrate binding site. N6-acetyllysine is present on lysine 81. Arginine 82 lines the NADP(+) pocket. Substrate contacts are provided by residues 94 to 100 (SPNGTIR) and arginine 109. Residue lysine 126 is modified to N6-succinyllysine. Residues arginine 132 and lysine 212 each coordinate substrate. Lysine 224, lysine 233, and lysine 243 each carry N6-acetyllysine. Aspartate 252 serves as a coordination point for Mn(2+). Lysine 260 contributes to the NADP(+) binding site. Residues aspartate 275 and aspartate 279 each contribute to the Mn(2+) site. 310–315 (GTVTRH) contacts NADP(+). An N6-acetyllysine modification is found at lysine 321. Asparagine 328 lines the NADP(+) pocket. A Phosphoserine modification is found at serine 389. Lysine 400 is subject to N6-succinyllysine.

Belongs to the isocitrate and isopropylmalate dehydrogenases family. In terms of assembly, homodimer. Mg(2+) serves as cofactor. It depends on Mn(2+) as a cofactor. Acetylation at Lys-374 dramatically reduces catalytic activity.

Its subcellular location is the cytoplasm. The protein localises to the cytosol. The catalysed reaction is D-threo-isocitrate + NADP(+) = 2-oxoglutarate + CO2 + NADPH. Its function is as follows. Catalyzes the NADP(+)-dependent oxidative decarboxylation of isocitrate (D-threo-isocitrate) to 2-ketoglutarate (2-oxoglutarate), which is required by other enzymes such as the phytanoyl-CoA dioxygenase. Plays a critical role in the generation of NADPH, an important cofactor in many biosynthesis pathways. May act as a corneal epithelial crystallin and may be involved in maintaining corneal epithelial transparency. This Pongo abelii (Sumatran orangutan) protein is Isocitrate dehydrogenase [NADP] cytoplasmic (IDH1).